Consider the following 151-residue polypeptide: Protein SprT-like (151 aa).

Positions 6–147 (LQRMVENLSE…GHCNGKLRMK (142 aa)) constitute a SprT-like domain. Histidine 67 lines the Zn(2+) pocket. Glutamate 68 is an active-site residue. Histidine 71 is a Zn(2+) binding site.

This sequence belongs to the SprT family. Zn(2+) serves as cofactor.

The protein resides in the cytoplasm. In Staphylococcus aureus (strain MRSA252), this protein is Protein SprT-like.